Reading from the N-terminus, the 161-residue chain is Phosphopantetheine adenylyltransferase (161 aa).

Thr-9 contacts substrate. ATP contacts are provided by residues 9-10 and His-17; that span reads TF. Substrate-binding residues include Lys-41, Leu-73, and Arg-87. ATP is bound by residues 88–90, Glu-98, and 123–129; these read GLR and LSYISST.

It belongs to the bacterial CoaD family. As to quaternary structure, homohexamer. Requires Mg(2+) as cofactor.

The protein localises to the cytoplasm. The enzyme catalyses (R)-4'-phosphopantetheine + ATP + H(+) = 3'-dephospho-CoA + diphosphate. Its pathway is cofactor biosynthesis; coenzyme A biosynthesis; CoA from (R)-pantothenate: step 4/5. Functionally, reversibly transfers an adenylyl group from ATP to 4'-phosphopantetheine, yielding dephospho-CoA (dPCoA) and pyrophosphate. This is Phosphopantetheine adenylyltransferase from Hahella chejuensis (strain KCTC 2396).